Consider the following 888-residue polypeptide: MNEKKDYKDTLNMPQTNFEMQAGLTRKEAQFRQRWLDNKLYHKILAKNKNNKQFVVHDGPPYANGSIHIGHALNKILKDIVVRFKSLQGFYSPFVPGWDTHGLPIENKMLSELKVNHKQIEVVKLRKEAAKYALNQMLIQKEQFLKLQMLSDFEEIYLTLDKNFEAKQLKLFKKMFFDGLIYKGLKPVYWSPSSMSALAEAEVEYYDHVSPSIYTCFTITKGNEFVEVDDELLIWTTTPWTLIANSGVAVGLDIEYSKVKFNKKNYIVASDLLEKVMEIFGVQKYKVVDTFKGKNLLGVEYQRPIKTDLFGIVVAGYHVSIDAGTGLVHMAPLFGEDDFIIGQENELDQIMHINDDGSINSEGDEFQGLFYSSANIKIKEFLEKNDKVMFFEYFTHSYPHDWRTKKPIIFRGTPQWFVSIDKIKPAILKEIEKIEGRPSWAVKRLATMIENRKTWTISRQRSWGVPIPIFYNEKNEIVNDEKVFDHVIELVEKYGSDVWFEKSVDELLPSEYKNKNWTKETNIMDVWFDSGSTSIGVEIEGVSVPFDLYLEGIDQYRGWFNSSIINSVAYWGQSPYRLLLSHGFVLDGKGKKMSKQLGNVVDPQEIIQKYGADILRLWVANCEYAHDVSVSESIIKQTVENYRKIRNTIKFLLGNLQDYDHSKFNLKLEGIHELINERLKKVKFDILQAYNDYDFNDVIKTLTNFLTDLSSFYLSISKDSLYADKINSKERRMIQYNMYNILEATLVVIAPIMPTTAEDAYDNFNKQDKQESVHLEKMFEATIADDKLEKTWKEFFDLKDEVYKEIEVEIANKKIKRTNDAHVTINTKSNFLMSLDLKKLLMIGKISFGSSLRVETFDSHKCPRCWNHIEKTEVVEDLCQRCYQTINS.

Positions 61–71 (PYANGSIHIGH) match the 'HIGH' region motif. Glu551 contributes to the L-isoleucyl-5'-AMP binding site. Residues 592–596 (KMSKQ) carry the 'KMSKS' region motif. Lys595 contacts ATP. Positions 862, 865, 879, and 882 each coordinate Zn(2+).

This sequence belongs to the class-I aminoacyl-tRNA synthetase family. IleS type 1 subfamily. In terms of assembly, monomer. Requires Zn(2+) as cofactor.

It is found in the cytoplasm. The catalysed reaction is tRNA(Ile) + L-isoleucine + ATP = L-isoleucyl-tRNA(Ile) + AMP + diphosphate. Its function is as follows. Catalyzes the attachment of isoleucine to tRNA(Ile). As IleRS can inadvertently accommodate and process structurally similar amino acids such as valine, to avoid such errors it has two additional distinct tRNA(Ile)-dependent editing activities. One activity is designated as 'pretransfer' editing and involves the hydrolysis of activated Val-AMP. The other activity is designated 'posttransfer' editing and involves deacylation of mischarged Val-tRNA(Ile). This chain is Isoleucine--tRNA ligase, found in Mycoplasmopsis pulmonis (strain UAB CTIP) (Mycoplasma pulmonis).